We begin with the raw amino-acid sequence, 373 residues long: MAKRDYYEVLGVNKSASKDEIKKAYRKLSKKYHPDINKEEGADEKFKEISEAYEVLSDENKRANYDQFGHDGPQGGFGSQGFGGSDFGGFEDIFSSFFGGGSRQRDPNAPRKGDDLQYTMTITFEEAVFGTKKEISIKKDVTCHTCNGDGAKPGTSKKTCSYCNGAGRVSVEQNTILGRVRTEQVCPKCEGSGQEFEEPCPTCKGKGTENKTVKLEVTVPEGVDNEQQVRLAGEGSPGVNGGPHGDLYVVFRVKPSNTFERDGDDIYYNLDISFSQAALGDEIKIPTLKSNVVLTIPAGTQTGKQFRLKDKGVKNVHGYGHGDLFVNIKVVTPTKLNDRQKELLKEFAEINGEDINEQSSNFKDRAKRFFKGE.

In terms of domain architecture, J spans 5-69; that stretch reads DYYEVLGVNK…NKRANYDQFG (65 aa). The segment at 130-212 adopts a CR-type zinc-finger fold; sequence GTKKEISIKK…CKGKGTENKT (83 aa). Positions 143, 146, 160, 163, 186, 189, 200, and 203 each coordinate Zn(2+). CXXCXGXG motif repeat units follow at residues 143-150, 160-167, 186-193, and 200-207; these read CHTCNGDG, CSYCNGAG, CPKCEGSG, and CPTCKGKG.

Belongs to the DnaJ family. In terms of assembly, homodimer. Requires Zn(2+) as cofactor.

It is found in the cytoplasm. Its function is as follows. Participates actively in the response to hyperosmotic and heat shock by preventing the aggregation of stress-denatured proteins and by disaggregating proteins, also in an autonomous, DnaK-independent fashion. Unfolded proteins bind initially to DnaJ; upon interaction with the DnaJ-bound protein, DnaK hydrolyzes its bound ATP, resulting in the formation of a stable complex. GrpE releases ADP from DnaK; ATP binding to DnaK triggers the release of the substrate protein, thus completing the reaction cycle. Several rounds of ATP-dependent interactions between DnaJ, DnaK and GrpE are required for fully efficient folding. Also involved, together with DnaK and GrpE, in the DNA replication of plasmids through activation of initiation proteins. This Staphylococcus epidermidis (strain ATCC 12228 / FDA PCI 1200) protein is Chaperone protein DnaJ.